A 463-amino-acid polypeptide reads, in one-letter code: Type IV secretion system protein PtlD (463 aa).

The signal sequence occupies residues 1–24 (MAGLSRILLSCTLACLLAGQAAQA). Transmembrane regions (helical) follow at residues 118–138 (LQPL…YALL), 232–252 (WLLC…LAAS), 253–273 (LLIV…LFLV), 294–314 (ALVF…VLAG), and 333–353 (MLAA…VPLA). The span at 376–410 (AHRQAAARQYAPRPAAAAAAAGPHQAGTYAASATP) shows a compositional bias: low complexity. Residues 376-463 (AHRQAAARQY…RVLPRKPNLP (88 aa)) are disordered. A compositionally biased stretch (pro residues) spans 411 to 420 (APAPARPAPS). The segment covering 441–455 (VRRDDRPAPAPDRRV) has biased composition (basic and acidic residues).

Its subcellular location is the cell membrane. Its function is as follows. Component of the type IV secretion system ptl required for secretion of assembled pertussis toxin (PTX) through the outer membrane. This chain is Type IV secretion system protein PtlD (ptlD), found in Bordetella pertussis (strain Tohama I / ATCC BAA-589 / NCTC 13251).